We begin with the raw amino-acid sequence, 361 residues long: 3-dehydroquinate synthase (361 aa).

NAD(+) is bound by residues 71-76 (DGEQYK), 105-109 (GVIGD), 129-130 (TT), Lys142, and Lys151. Zn(2+) contacts are provided by Glu184, His247, and His264.

This sequence belongs to the sugar phosphate cyclases superfamily. Dehydroquinate synthase family. It depends on Co(2+) as a cofactor. The cofactor is Zn(2+). Requires NAD(+) as cofactor.

The protein resides in the cytoplasm. It catalyses the reaction 7-phospho-2-dehydro-3-deoxy-D-arabino-heptonate = 3-dehydroquinate + phosphate. Its pathway is metabolic intermediate biosynthesis; chorismate biosynthesis; chorismate from D-erythrose 4-phosphate and phosphoenolpyruvate: step 2/7. Functionally, catalyzes the conversion of 3-deoxy-D-arabino-heptulosonate 7-phosphate (DAHP) to dehydroquinate (DHQ). In Pectobacterium atrosepticum (strain SCRI 1043 / ATCC BAA-672) (Erwinia carotovora subsp. atroseptica), this protein is 3-dehydroquinate synthase.